The sequence spans 469 residues: 3-isopropylmalate dehydratase large subunit (469 aa).

3 residues coordinate [4Fe-4S] cluster: C349, C410, and C413.

It belongs to the aconitase/IPM isomerase family. LeuC type 1 subfamily. As to quaternary structure, heterodimer of LeuC and LeuD. It depends on [4Fe-4S] cluster as a cofactor.

The catalysed reaction is (2R,3S)-3-isopropylmalate = (2S)-2-isopropylmalate. Its pathway is amino-acid biosynthesis; L-leucine biosynthesis; L-leucine from 3-methyl-2-oxobutanoate: step 2/4. In terms of biological role, catalyzes the isomerization between 2-isopropylmalate and 3-isopropylmalate, via the formation of 2-isopropylmaleate. The chain is 3-isopropylmalate dehydratase large subunit from Neisseria meningitidis serogroup C (strain 053442).